A 433-amino-acid polypeptide reads, in one-letter code: Serine/threonine-protein kinase STK11 (433 aa).

A Phosphoserine modification is found at S31. Residues K44 and K48 each carry the N6-acetyllysine modification. Residues 45 to 90 (LIGKYLMGDLLGEGSYGKVKEVLDSETLCRRAVKILKKKKLRRIPN) form a sufficient for interaction with SIRT1 region. The 261-residue stretch at 49-309 (YLMGDLLGEG…IRQIRQHSWF (261 aa)) folds into the Protein kinase domain. Residues 55 to 63 (LGEGSYGKV) and K78 each bind ATP. An N6-acetyllysine mark is found at K96 and K97. The active-site Proton acceptor is D176. A Phosphothreonine; by autocatalysis modification is found at T189. 2 positions are modified to N6-acetyllysine: K296 and K311. Positions 312–331 (KHPPAEAPVPIPPSPDTKDR) are disordered. Residues 316-326 (AEAPVPIPPSP) show a composition bias toward pro residues. Position 325 is a phosphoserine (S325). T336 carries the post-translational modification Phosphothreonine; by autocatalysis. Phosphothreonine; by ATM and autocatalysis is present on T363. The tract at residues 397–433 (AAQLSTKSRAEGRAPNPARKACSASSKIRRLSACKQQ) is disordered. 2 positions are modified to phosphoserine: Q399 and S401. N6-acetyllysine is present on K416. C418 is lipidated: S-palmitoyl cysteine. Residue K423 is modified to N6-acetyllysine. Residues 423–433 (KIRRLSACKQQ) are compositionally biased toward basic residues. The residue at position 428 (S428) is a Phosphoserine; by autocatalysis, PKA, PKC/PRKCZ and RPS6KA1. Residue C430 is modified to Cysteine methyl ester. A lipid anchor (S-farnesyl cysteine) is attached at C430. The residue at position 431 (K431) is an N6-acetyllysine. Residues 431–433 (KQQ) constitute a propeptide, removed in mature form.

The protein belongs to the protein kinase superfamily. CAMK Ser/Thr protein kinase family. LKB1 subfamily. As to quaternary structure, catalytic component of a trimeric complex composed of STK11/LKB1, STRAD (STRADA or STRADB) and CAB39/MO25 (CAB39/MO25alpha or CAB39L/MO25beta): the complex tethers STK11/LKB1 in the cytoplasm and stimulates its catalytic activity. Found in a ternary complex composed of SMAD4, STK11/LKB1 and STK11IP. Interacts with p53/TP53, SMAD4, STK11IP and WDR6. Interacts with NR4A1. Interacts with NISCH; this interaction may increase STK11 activity. Interacts with PTEN; leading to PTEN phosphorylation. Interacts with SIRT1; the interaction deacetylates STK11. Interacts with CDKN1A. Mg(2+) is required as a cofactor. It depends on Mn(2+) as a cofactor. Phosphorylated by ATM at Thr-363 following ionizing radiation (IR). Phosphorylation at Ser-428 by RPS6KA1 and/or some PKA is required to inhibit cell growth. Phosphorylation at Ser-428 is also required during neuronal polarization to mediate phosphorylation of BRSK1 and BRSK2. Phosphorylation by PKC/PRKCZ at Ser-399 in isoform 2 promotes metformin (or peroxynitrite)-induced nuclear export of STK11 and activation of AMPK. UV radiation-induced phosphorylation at Thr-363 mediates CDKN1A degradation. Post-translationally, acetylated. Deacetylation at Lys-48 enhances cytoplasmic localization and kinase activity in vitro. Ubiquitously expressed. Strongest expression in testis and fetal liver.

It localises to the nucleus. Its subcellular location is the cytoplasm. The protein localises to the membrane. It is found in the mitochondrion. It carries out the reaction L-seryl-[protein] + ATP = O-phospho-L-seryl-[protein] + ADP + H(+). The enzyme catalyses L-threonyl-[protein] + ATP = O-phospho-L-threonyl-[protein] + ADP + H(+). With respect to regulation, activated by forming a complex with STRAD (STRADA or STRADB) and CAB39/MO25 (CAB39/MO25alpha or CAB39L/MO25beta): STRADA (or STRADB)-binding promotes a conformational change of STK11/LKB1 in an active conformation, which is stabilized by CAB39/MO25alpha (or CAB39L/MO25beta) interacting with the STK11/LKB1 activation loop. Sequestration in the nucleus by NR4A1 prevents it from phosphorylating and activating cytoplasmic AMPK. Its function is as follows. Tumor suppressor serine/threonine-protein kinase that controls the activity of AMP-activated protein kinase (AMPK) family members, thereby playing a role in various processes such as cell metabolism, cell polarity, apoptosis and DNA damage response. Acts by phosphorylating the T-loop of AMPK family proteins, thus promoting their activity: phosphorylates PRKAA1, PRKAA2, BRSK1, BRSK2, MARK1, MARK2, MARK3, MARK4, NUAK1, NUAK2, SIK1, SIK2, SIK3 and SNRK but not MELK. Also phosphorylates non-AMPK family proteins such as STRADA, PTEN and possibly p53/TP53. Acts as a key upstream regulator of AMPK by mediating phosphorylation and activation of AMPK catalytic subunits PRKAA1 and PRKAA2 and thereby regulates processes including: inhibition of signaling pathways that promote cell growth and proliferation when energy levels are low, glucose homeostasis in liver, activation of autophagy when cells undergo nutrient deprivation, and B-cell differentiation in the germinal center in response to DNA damage. Also acts as a regulator of cellular polarity by remodeling the actin cytoskeleton. Required for cortical neuron polarization by mediating phosphorylation and activation of BRSK1 and BRSK2, leading to axon initiation and specification. Involved in DNA damage response: interacts with p53/TP53 and recruited to the CDKN1A/WAF1 promoter to participate in transcription activation. Able to phosphorylate p53/TP53; the relevance of such result in vivo is however unclear and phosphorylation may be indirect and mediated by downstream STK11/LKB1 kinase NUAK1. Also acts as a mediator of p53/TP53-dependent apoptosis via interaction with p53/TP53: translocates to the mitochondrion during apoptosis and regulates p53/TP53-dependent apoptosis pathways. Regulates UV radiation-induced DNA damage response mediated by CDKN1A. In association with NUAK1, phosphorylates CDKN1A in response to UV radiation and contributes to its degradation which is necessary for optimal DNA repair. Functionally, has a role in spermiogenesis. The chain is Serine/threonine-protein kinase STK11 from Homo sapiens (Human).